The following is a 607-amino-acid chain: Siderophore iron transporter mirC (607 aa).

Transmembrane regions (helical) follow at residues 67-89 (LVIAYISIFLMAFCTSLEGQTIM), 129-148 (VFGRFEAFCVSILIYVLGYI), 186-208 (SLLNRALLALLPELPFLVTVWIG), 223-245 (WGYGMWSIILPASFLPLALSLLL), 279-301 (IFGLALLSAAVTLILVPLTLAAN), 311-328 (IVAMIVIGVVCLILLPFW), 349-368 (TALAGCCLAFFYFMAFYFSV), 388-410 (GRVTQTFAFTSTIAAFGVSILIK), 417-436 (VYVTLGCVIYMTGLLLMLLY), 446-468 (VLGTQVIVGMGGGLLNVPVQLGV), 481-503 (TAMFLTSMEMGGAVGAAISGAVW), and 557-574 (LLVLALLATLPLIPLSLL). Over residues 584–593 (SESSDHDDAS) the composition is skewed to basic and acidic residues. Positions 584–607 (SESSDHDDASPRNGLGPGERAKRT) are disordered.

It belongs to the major facilitator superfamily.

The protein resides in the membrane. This is Siderophore iron transporter mirC (mirC) from Emericella nidulans (strain FGSC A4 / ATCC 38163 / CBS 112.46 / NRRL 194 / M139) (Aspergillus nidulans).